A 582-amino-acid chain; its full sequence is Zinc finger protein somi-1 (582 aa).

Disordered regions lie at residues 179–251 (LRPE…NNTD) and 352–377 (SAEP…KKEQ). Residues 188 to 226 (TQKSTNGVHRSTSNSSAETLRNNSVSAATVSPSDDNSLN) are compositionally biased toward polar residues. A compositionally biased stretch (low complexity) spans 227–244 (SPALTSSGSAGSGTPPLG). Basic and acidic residues predominate over residues 352 to 368 (SAEPMKRHRVEAHEKQS). The C2H2-type; Degenerate zinc-finger motif lies at 454-477 (YICEDCDFVTVYKGNMKRHLNTCH). Residues 513–582 (AHKANSSRGR…PPPPPPPMLL (70 aa)) are disordered. A compositionally biased stretch (low complexity) spans 551-570 (LLESLASSSSSMGGYSNGNN). Pro residues predominate over residues 572-582 (QPPPPPPPMLL).

May interact with swsn-9; the interaction promotes hypodermal differentiation. In terms of tissue distribution, expressed in hypodermal seam cells, the somatic gonad and vulval precursor cells, body wall muscle and head neurons.

The protein resides in the nucleus. Its function is as follows. DNA-binding protein which binds to the promoters of let-60, lin-14 and lin-28, possibly to regulate genes involved in hypodermal and vulval development. Together with miRNAs mir-84 and let-7 may direct terminal differentiation of the seam cells, exit from the molting cycle, and vulva formation. Does not regulate the expression of mir-84. May promote hypodermal differentiation in association with swsn-9, a component of SWI/SNF chromatin remodeling complexes. The sequence is that of Zinc finger protein somi-1 from Caenorhabditis elegans.